The chain runs to 242 residues: Probable 2-phosphosulfolactate phosphatase (242 aa).

The protein belongs to the ComB family. It depends on Mg(2+) as a cofactor.

It catalyses the reaction (2R)-O-phospho-3-sulfolactate + H2O = (2R)-3-sulfolactate + phosphate. This is Probable 2-phosphosulfolactate phosphatase from Synechococcus sp. (strain JA-3-3Ab) (Cyanobacteria bacterium Yellowstone A-Prime).